A 463-amino-acid chain; its full sequence is Homoserine O-acetyltransferase FUB5 (463 aa).

One can recognise an AB hydrolase-1 domain in the interval 113–436 (NVMIICHALS…VSDDGHDAFL (324 aa)). The active-site Nucleophile is serine 211. The segment covering 296 to 312 (RFGRDTGSKKKTQKQES) has biased composition (basic and acidic residues). Positions 296–331 (RFGRDTGSKKKTQKQESKTLPSNSTPIHSHSGADET) are disordered. Active-site residues include aspartate 403 and histidine 432.

The protein belongs to the AB hydrolase superfamily. MetX family.

The catalysed reaction is L-homoserine + acetyl-CoA = O-acetyl-L-homoserine + CoA. Its pathway is mycotoxin biosynthesis. Functionally, homoserine O-acetyltransferase; part of the gene cluster that mediates the biosynthesis of fusaric acid, a mycotoxin with low to moderate toxicity to animals and humans, but with high phytotoxic properties. L-aspartate is suggested as fusaric acid amino acid precursor that is activated and further processed to O-acetyl-L-homoserine by cluster enzymes aspartate kinase FUB3 and homoserine O-acetyltransferase FUB5, as well as enzymes of the primary metabolism. The polyketide synthase (PKS) FUB1 generates the triketide trans-2-hexenal which is presumptively released by the hydrolase FUB4 and linked to the NRPS-bound amino acid precursor by NAD(P)-dependent dehydrogenase FUB6. FUB1, FUB4, and the non-canonical NRPS Fub8 may form an enzyme complex. Further processing of the NRPS-bound intermediate might be carried out by FUB6 and the sulfhydrylase FUB7, enabling a spontaneous electrocyclization to close the carbon backbone of fusaric acid. Dihydrofusaric acid is likely to be released via reduction by the thioester reductase (TR) domain of FUB8 whereupon the final oxidation to fusaric acid may (also) be performed by the FMN-dependent dehydrogenase FUB9. This is Homoserine O-acetyltransferase FUB5 from Gibberella moniliformis (strain M3125 / FGSC 7600) (Maize ear and stalk rot fungus).